Here is a 307-residue protein sequence, read N- to C-terminus: HPr kinase/phosphorylase (307 aa).

Active-site residues include His-136 and Lys-157. 151-158 (GESGIGKS) contacts ATP. Mg(2+) is bound at residue Ser-158. Asp-175 acts as the Proton acceptor; for phosphorylation activity. Proton donor; for dephosphorylation activity in catalysis. The tract at residues 198-207 (LEVRGMGIID) is important for the catalytic mechanism of both phosphorylation and dephosphorylation. Glu-199 provides a ligand contact to Mg(2+). Arg-240 is an active-site residue. Residues 261 to 266 (PIRPGR) are important for the catalytic mechanism of dephosphorylation.

It belongs to the HPrK/P family. In terms of assembly, homohexamer. Mg(2+) is required as a cofactor.

The enzyme catalyses [HPr protein]-L-serine + ATP = [HPr protein]-O-phospho-L-serine + ADP + H(+). It carries out the reaction [HPr protein]-O-phospho-L-serine + phosphate + H(+) = [HPr protein]-L-serine + diphosphate. Functionally, catalyzes the ATP- as well as the pyrophosphate-dependent phosphorylation of a specific serine residue in HPr, a phosphocarrier protein of the phosphoenolpyruvate-dependent sugar phosphotransferase system (PTS). HprK/P also catalyzes the pyrophosphate-producing, inorganic phosphate-dependent dephosphorylation (phosphorolysis) of seryl-phosphorylated HPr (P-Ser-HPr). The two antagonistic activities of HprK/P are regulated by several intracellular metabolites, which change their concentration in response to the absence or presence of rapidly metabolisable carbon sources (glucose, fructose, etc.) in the growth medium. Therefore, by controlling the phosphorylation state of HPr, HPrK/P is a sensor enzyme that plays a major role in the regulation of carbon metabolism and sugar transport: it mediates carbon catabolite repression (CCR), and regulates PTS-catalyzed carbohydrate uptake and inducer exclusion. This Clostridium novyi (strain NT) protein is HPr kinase/phosphorylase.